The primary structure comprises 147 residues: UPF0310 protein in gntR 5'region (147 aa).

Belongs to the UPF0310 family.

The polypeptide is UPF0310 protein in gntR 5'region (oug) (Bacillus licheniformis).